The chain runs to 360 residues: Phospho-N-acetylmuramoyl-pentapeptide-transferase (360 aa).

10 helical membrane passes run 26-46, 70-90, 97-117, 132-152, 168-188, 199-219, 236-256, 263-283, 288-308, and 338-358; these read TILG…AVIQ, GTPT…TLLW, YVWV…VDDY, AKFF…FSTA, VVLP…VGSS, GLAI…AYAT, AGEV…FLWF, VFMG…LAVV, LVLL…MLQV, and VIVR…AMLK.

It belongs to the glycosyltransferase 4 family. MraY subfamily. Mg(2+) serves as cofactor.

It is found in the cell inner membrane. It carries out the reaction UDP-N-acetyl-alpha-D-muramoyl-L-alanyl-gamma-D-glutamyl-meso-2,6-diaminopimeloyl-D-alanyl-D-alanine + di-trans,octa-cis-undecaprenyl phosphate = di-trans,octa-cis-undecaprenyl diphospho-N-acetyl-alpha-D-muramoyl-L-alanyl-D-glutamyl-meso-2,6-diaminopimeloyl-D-alanyl-D-alanine + UMP. The protein operates within cell wall biogenesis; peptidoglycan biosynthesis. In terms of biological role, catalyzes the initial step of the lipid cycle reactions in the biosynthesis of the cell wall peptidoglycan: transfers peptidoglycan precursor phospho-MurNAc-pentapeptide from UDP-MurNAc-pentapeptide onto the lipid carrier undecaprenyl phosphate, yielding undecaprenyl-pyrophosphoryl-MurNAc-pentapeptide, known as lipid I. This chain is Phospho-N-acetylmuramoyl-pentapeptide-transferase, found in Alkalilimnicola ehrlichii (strain ATCC BAA-1101 / DSM 17681 / MLHE-1).